Here is a 284-residue protein sequence, read N- to C-terminus: Tropomyosin (284 aa).

A coiled-coil region spans residues 1 to 284 (MDGIKKKMIA…DQTFAELTGY (284 aa)). The segment at 111–131 (TKLEEASKTAEESERGRKDLE) is disordered.

Belongs to the tropomyosin family. Homodimer.

Its function is as follows. Tropomyosin, in association with the troponin complex, plays a central role in the calcium dependent regulation of muscle contraction. This Schistosoma japonicum (Blood fluke) protein is Tropomyosin.